Here is an 80-residue protein sequence, read N- to C-terminus: Acyl carrier protein (80 aa).

A Carrier domain is found at 4 to 79 (EAILEKVRSI…DAVKYIEDKQ (76 aa)). Ser39 bears the O-(pantetheine 4'-phosphoryl)serine mark.

It belongs to the acyl carrier protein (ACP) family. 4'-phosphopantetheine is transferred from CoA to a specific serine of apo-ACP by AcpS. This modification is essential for activity because fatty acids are bound in thioester linkage to the sulfhydryl of the prosthetic group.

The protein localises to the cytoplasm. Its pathway is lipid metabolism; fatty acid biosynthesis. Functionally, carrier of the growing fatty acid chain in fatty acid biosynthesis. The polypeptide is Acyl carrier protein (Parasynechococcus marenigrum (strain WH8102)).